The following is a 250-amino-acid chain: MAEQVKLSVELIACSSFTPPADVEWSTDVEGAEALVEFAGRACYETFDKPNPRTASNAAYLRHIMEVGHTALLEHANATMYIRGISRSATHELVRHRHFSFSQLSQRFVHSGESEVVVPTLIDEDPQLRELFMHAMDESRFAFNELLNALEEKLGDEPNALLRKKQARQAARAVLPNATESRIVVSGNFRTWRHFIGMRASEHADVEIREVAVECLRKLQVAAPTVFGDFEIETLADGSQMATSPYVMDF.

The ThyX domain occupies leucine 7–glutamate 233. Residues glutamate 92 to arginine 95, glutamine 103 to arginine 107, and arginine 172 contribute to the dUMP site. FAD contacts are provided by residues arginine 95–arginine 97 and glutamine 103. Residues arginine 95–serine 105 carry the ThyX motif motif. Residues asparagine 188–arginine 190 and histidine 194 each bind FAD. Arginine 199 provides a ligand contact to dUMP. Residue arginine 199 is the Involved in ionization of N3 of dUMP, leading to its activation of the active site.

Belongs to the thymidylate synthase ThyX family. As to quaternary structure, homotetramer. FAD is required as a cofactor.

The enzyme catalyses dUMP + (6R)-5,10-methylene-5,6,7,8-tetrahydrofolate + NADPH + H(+) = dTMP + (6S)-5,6,7,8-tetrahydrofolate + NADP(+). It participates in pyrimidine metabolism; dTTP biosynthesis. Catalyzes the reductive methylation of 2'-deoxyuridine-5'-monophosphate (dUMP) to 2'-deoxythymidine-5'-monophosphate (dTMP) while utilizing 5,10-methylenetetrahydrofolate (mTHF) as the methyl donor, and NADPH and FADH(2) as the reductant. The sequence is that of Flavin-dependent thymidylate synthase from Corynebacterium glutamicum (strain ATCC 13032 / DSM 20300 / JCM 1318 / BCRC 11384 / CCUG 27702 / LMG 3730 / NBRC 12168 / NCIMB 10025 / NRRL B-2784 / 534).